Here is a 151-residue protein sequence, read N- to C-terminus: uncharacterized protein (151 aa).

A disordered region spans residues 1-77; it reads MSLLGGMWKS…LGSNPISSSR (77 aa). Composition is skewed to low complexity over residues 19–54 and 63–76; these read PKPS…RSSN and SISG…ISSS.

This is an uncharacterized protein from Methanothermobacter marburgensis (strain ATCC BAA-927 / DSM 2133 / JCM 14651 / NBRC 100331 / OCM 82 / Marburg) (Methanobacterium thermoautotrophicum).